Here is a 343-residue protein sequence, read N- to C-terminus: Probable fructokinase-7 (343 aa).

Gly2 bears the N-acetylglycine mark.

Belongs to the carbohydrate kinase PfkB family.

It carries out the reaction D-fructose + ATP = D-fructose 6-phosphate + ADP + H(+). It functions in the pathway glycan biosynthesis; starch biosynthesis. May play an important role in maintaining the flux of carbon towards starch formation. In Arabidopsis thaliana (Mouse-ear cress), this protein is Probable fructokinase-7.